The chain runs to 490 residues: Cobyric acid synthase (490 aa).

In terms of domain architecture, GATase cobBQ-type spans glycine 251–phenylalanine 444. Cysteine 329 serves as the catalytic Nucleophile. Histidine 436 is an active-site residue.

This sequence belongs to the CobB/CobQ family. CobQ subfamily.

It functions in the pathway cofactor biosynthesis; adenosylcobalamin biosynthesis. Its function is as follows. Catalyzes amidations at positions B, D, E, and G on adenosylcobyrinic A,C-diamide. NH(2) groups are provided by glutamine, and one molecule of ATP is hydrogenolyzed for each amidation. The polypeptide is Cobyric acid synthase (Roseiflexus castenholzii (strain DSM 13941 / HLO8)).